We begin with the raw amino-acid sequence, 437 residues long: GTPase Obg (437 aa).

The Obg domain maps to 2-160 (SMFLDTAKIS…RELQLELKIL (159 aa)). The disordered stretch occupies residues 127–146 (GNIRFATPRNPAPEIAENGE). Residues 161–338 (ADVGLVGFPS…LLEATAELLD (178 aa)) form the OBG-type G domain. GTP is bound by residues 167–174 (GFPSVGKS), 192–196 (FTTIV), 214–217 (DLPG), 284–287 (NKMD), and 319–321 (SSL). Mg(2+) contacts are provided by serine 174 and threonine 194. The OCT domain maps to 359–437 (GFNEEERPFE…IGNFEFEFVD (79 aa)).

It belongs to the TRAFAC class OBG-HflX-like GTPase superfamily. OBG GTPase family. As to quaternary structure, monomer. Mg(2+) serves as cofactor.

The protein resides in the cytoplasm. Functionally, an essential GTPase which binds GTP, GDP and possibly (p)ppGpp with moderate affinity, with high nucleotide exchange rates and a fairly low GTP hydrolysis rate. Plays a role in control of the cell cycle, stress response, ribosome biogenesis and in those bacteria that undergo differentiation, in morphogenesis control. The sequence is that of GTPase Obg from Streptococcus thermophilus (strain ATCC BAA-491 / LMD-9).